Reading from the N-terminus, the 103-residue chain is Large ribosomal subunit protein uL24 (103 aa).

The protein belongs to the universal ribosomal protein uL24 family. In terms of assembly, part of the 50S ribosomal subunit.

Functionally, one of two assembly initiator proteins, it binds directly to the 5'-end of the 23S rRNA, where it nucleates assembly of the 50S subunit. In terms of biological role, one of the proteins that surrounds the polypeptide exit tunnel on the outside of the subunit. The chain is Large ribosomal subunit protein uL24 from Haemophilus ducreyi (strain 35000HP / ATCC 700724).